The primary structure comprises 395 residues: Formate-dependent phosphoribosylglycinamide formyltransferase (395 aa).

N(1)-(5-phospho-beta-D-ribosyl)glycinamide-binding positions include 22 to 23 (EL) and Glu82. ATP contacts are provided by residues Arg115, Lys156, 161–166 (SSGKGQ), 196–199 (EGFI), and Glu204. The region spanning 120–309 (RLAAETLGLP…EFALHARAIL (190 aa)) is the ATP-grasp domain. Positions 268 and 280 each coordinate Mg(2+). N(1)-(5-phospho-beta-D-ribosyl)glycinamide contacts are provided by residues Asp287, Lys356, and 363–364 (RR).

It belongs to the PurK/PurT family. Homodimer.

It carries out the reaction N(1)-(5-phospho-beta-D-ribosyl)glycinamide + formate + ATP = N(2)-formyl-N(1)-(5-phospho-beta-D-ribosyl)glycinamide + ADP + phosphate + H(+). It participates in purine metabolism; IMP biosynthesis via de novo pathway; N(2)-formyl-N(1)-(5-phospho-D-ribosyl)glycinamide from N(1)-(5-phospho-D-ribosyl)glycinamide (formate route): step 1/1. Its function is as follows. Involved in the de novo purine biosynthesis. Catalyzes the transfer of formate to 5-phospho-ribosyl-glycinamide (GAR), producing 5-phospho-ribosyl-N-formylglycinamide (FGAR). Formate is provided by PurU via hydrolysis of 10-formyl-tetrahydrofolate. The polypeptide is Formate-dependent phosphoribosylglycinamide formyltransferase (Stenotrophomonas maltophilia (strain R551-3)).